The sequence spans 294 residues: Mitochondrial substrate carrier family protein ucpB (294 aa).

Residues 1–10 lie on the Mitochondrial intermembrane side of the membrane; sequence MTSQESIGIK. Solcar repeat units lie at residues 9 to 93, 101 to 187, and 197 to 288; these read IKFL…IKNY, TNLL…IKHM, and DGLQ…LRKV. A helical transmembrane segment spans residues 11-31; the sequence is FLFGGLSCMGAAVVSNPVDVL. The Mitochondrial matrix portion of the chain corresponds to 32–67; that stretch reads KTRFQIHGEGIDSKSLGLVNGTIKIIKNEGISAMYK. The helical transmembrane segment at 68–88 threads the bilayer; it reads GLTPSLLREATYSTLRMGGYD. At 89–106 the chain is on the mitochondrial intermembrane side; the sequence is VIKNYFIDSNGKTNLLSK. A helical transmembrane segment spans residues 107-127; it reads VTSGALSGALGACITSPTDLI. Residues 128–161 are Mitochondrial matrix-facing; sequence KVRMQASSKGVKYDSISSAFKEIIAKEGIKGLWK. Residues 162–182 form a helical membrane-spanning segment; the sequence is GVGPTTQRAALLTASQIPSYD. Over 183-192 the chain is Mitochondrial intermembrane; the sequence is HIKHMILDHG. A helical membrane pass occupies residues 193–213; the sequence is IIQVDGLQVHIVSSIFAGLIA. At 214–267 the chain is on the mitochondrial matrix side; the sequence is SITTSPVDLVKTRIMNQPFDSNGVGLIYKSSYDCFKKTFQSEGISGLYKGFLPN. A helical membrane pass occupies residues 268–285; sequence WFRIGPHTIVTFILYEYL. The Mitochondrial intermembrane portion of the chain corresponds to 286–294; the sequence is RKVSGIKPI.

It belongs to the mitochondrial carrier (TC 2.A.29) family.

It is found in the mitochondrion inner membrane. Its function is as follows. Mitochondrial solute carriers shuttle metabolites, nucleotides, and cofactors through the mitochondrial inner membrane. This is Mitochondrial substrate carrier family protein ucpB (ucpB) from Dictyostelium discoideum (Social amoeba).